The primary structure comprises 610 residues: Calcium-dependent protein kinase 1 (610 aa).

Gly2 carries N-myristoyl glycine lipidation. Residue Cys5 is the site of S-palmitoyl cysteine attachment. The disordered stretch occupies residues 17-133 (VSAAMWRPRD…HMKRVSSAGL (117 aa)). Basic and acidic residues-rich tracts occupy residues 47–56 (LRSRLSDEVQ) and 70–117 (TDVE…DPPA). A compositionally biased stretch (basic residues) spans 118–127 (KPKKPKHMKR). The region spanning 150–408 (YSLGRKLGQG…AHQVLCHPWV (259 aa)) is the Protein kinase domain. Residues 156–164 (LGQGQFGTT) and Lys179 each bind ATP. Asp274 (proton acceptor) is an active-site residue. Ser314 is modified (phosphoserine). The tract at residues 414–444 (APDKPLDSAVLSRMKQFSAMNKFKKMALRVI) is autoinhibitory domain. 4 consecutive EF-hand domains span residues 451–486 (EEIA…VGAN), 487–522 (LKES…LNKI), 523–558 (ERED…FGVE), and 559–592 (DVRI…GSIT). Ca(2+) contacts are provided by Asp464, Asp466, Ser468, Gln470, Glu475, Asp500, Asp502, Ser504, Thr506, Glu511, Asp536, Asp538, Ser540, Tyr542, Glu547, Asp570, Asp572, Asp574, Arg576, and Glu581.

Belongs to the protein kinase superfamily. Ser/Thr protein kinase family. CDPK subfamily. Interacts with 14-3-3 proteins.

It localises to the peroxisome membrane. It carries out the reaction L-seryl-[protein] + ATP = O-phospho-L-seryl-[protein] + ADP + H(+). It catalyses the reaction L-threonyl-[protein] + ATP = O-phospho-L-threonyl-[protein] + ADP + H(+). Activated by calcium. Autophosphorylation may play an important role in the regulation of the kinase activity. May play a role in signal transduction pathways that involve calcium as a second messenger. Phosphorylates the Ca(2+)-ATPase ACA2 resulting in the inhibition of its calcium activation. This Arabidopsis thaliana (Mouse-ear cress) protein is Calcium-dependent protein kinase 1 (CPK1).